A 1337-amino-acid chain; its full sequence is Multidrug resistance protein fer6 (1337 aa).

The signal sequence occupies residues 1–23 (MTPEASANWFSLCWFAWIDPILT). An N-linked (GlcNAc...) asparagine glycan is attached at Asn-71. 2 helical membrane passes run 94 to 114 (FWIG…SPLL) and 138 to 158 (LGSG…CVFL). One can recognise an ABC transmembrane type-1 1 domain in the interval 95-386 (WIGGLLKLLA…LPIAWNAIVD (292 aa)). N-linked (GlcNAc...) asparagine glycosylation occurs at Asn-187. A run of 4 helical transmembrane segments spans residues 220–242 (FFHM…IWSL), 247–269 (LPGI…RLFA), 331–351 (ALAF…YALV), and 359–379 (ILFS…FLPI). The region spanning 417 to 667 (IQLEDASFTW…KGRVAELLLT (251 aa)) is the ABC transporter 1 domain. Residues 432-460 (ADTAKPVNEKKGQDSPSNEKETPVDRAST) are disordered. The segment covering 438–455 (VNEKKGQDSPSNEKETPV) has biased composition (basic and acidic residues). N-linked (GlcNAc...) asparagine glycosylation is present at Asn-465. An ATP-binding site is contributed by 478 to 485 (GGVGSGKS). Residues 699-751 (GSASNRNSEASESTTTTVNAESKDTSNAEGVTNKTEKKDLVAPPAQAKSKALM) form a disordered region. The segment covering 700–718 (SASNRNSEASESTTTTVNA) has biased composition (low complexity). The N-linked (GlcNAc...) asparagine glycan is linked to Asn-731. The next 6 helical transmembrane spans lie at 769-789 (YLNA…VLVF), 817-837 (GIYA…GVIF), 890-909 (AMRT…VLIA), 915-933 (FLIP…AAYY), 999-1019 (LSVR…ILVV), and 1028-1048 (GETG…GWMI). An ABC transmembrane type-1 2 domain is found at 781 to 1056 (LFLVAVLVFQ…MIRHAAELEN (276 aa)). Asn-1057 carries an N-linked (GlcNAc...) asparagine glycan. Residues 1097–1325 (IRFEGVEAKY…EKGAFRALCD (229 aa)) enclose the ABC transporter 2 domain. Position 1131 to 1138 (1131 to 1138 (GRTGAGKS)) interacts with ATP. N-linked (GlcNAc...) asparagine glycosylation occurs at Asn-1227.

This sequence belongs to the ABC transporter superfamily. ABCC family. Conjugate transporter (TC 3.A.1.208) subfamily.

It localises to the membrane. Multidrug resistance protein; part of the gene cluster that mediates the biosynthesis of siderophore ferrichrome A which is contributing to organismal virulence. In Mycosarcoma maydis (Corn smut fungus), this protein is Multidrug resistance protein fer6.